Here is a 346-residue protein sequence, read N- to C-terminus: Transcription factor 19 (346 aa).

One can recognise an FHA domain in the interval 31-88; it reads YRLGCRADLCDVALRPQQEPGFISEVHAELHAERRGDDWRVSLEDHSSQGTLVNNVRL. A Phosphoserine modification is found at S78. Disordered stretches follow at residues 136 to 168 and 190 to 289; these read PRSR…TLSP and LTFS…AAGG. Residues 138 to 147 are compositionally biased toward basic and acidic residues; sequence SRGEEGETRA. Polar residues predominate over residues 190-208; that stretch reads LTFSRSGSGPQNPPVSTTP. Over residues 250 to 260 the composition is skewed to basic and acidic residues; it reads EPRKKLLRVEK. The PHD-type zinc-finger motif lies at 294–343; it reads AAPCCCLPQEETVAWVQCDGCDTWFHVACVGCSIQAAKEADFRCPGCRVG. Residues C297, C299, C311, C314, H319, C322, C337, and C340 each contribute to the Zn(2+) site.

The protein resides in the nucleus. Potential transcription factor that may play a role in the regulation of genes involved in cell cycle G1/S transition. May bind to regulatory elements of genes, including the promoter of the transcription factor FOXO1. This is Transcription factor 19 (TCF19) from Sus scrofa (Pig).